The sequence spans 262 residues: Large ribosomal subunit protein eL8B (262 aa).

The segment at M1–G36 is disordered.

Belongs to the eukaryotic ribosomal protein eL8 family. As to quaternary structure, component of the large ribosomal subunit. Mature ribosomes consist of a small (40S) and a large (60S) subunit. The 40S subunit contains about 32 different proteins and 1 molecule of RNA (18S). The 60S subunit contains 45 different proteins and 3 molecules of RNA (25S, 5.8S and 5S).

The protein resides in the cytoplasm. In terms of biological role, component of the ribosome, a large ribonucleoprotein complex responsible for the synthesis of proteins in the cell. The small ribosomal subunit (SSU) binds messenger RNAs (mRNAs) and translates the encoded message by selecting cognate aminoacyl-transfer RNA (tRNA) molecules. The large subunit (LSU) contains the ribosomal catalytic site termed the peptidyl transferase center (PTC), which catalyzes the formation of peptide bonds, thereby polymerizing the amino acids delivered by tRNAs into a polypeptide chain. The nascent polypeptides leave the ribosome through a tunnel in the LSU and interact with protein factors that function in enzymatic processing, targeting, and the membrane insertion of nascent chains at the exit of the ribosomal tunnel. This is Large ribosomal subunit protein eL8B from Candida albicans (strain SC5314 / ATCC MYA-2876) (Yeast).